The chain runs to 116 residues: Large ribosomal subunit protein bL17 (116 aa).

The protein belongs to the bacterial ribosomal protein bL17 family. In terms of assembly, part of the 50S ribosomal subunit. Contacts protein L32.

The chain is Large ribosomal subunit protein bL17 from Trichodesmium erythraeum (strain IMS101).